The chain runs to 867 residues: Replication origin-binding protein (867 aa).

The disordered stretch occupies residues 1–39 (MNVATCTHQTHHAARAPGATSAPGAASGDPLGARRPIGD). The span at 15–28 (RAPGATSAPGAASG) shows a compositional bias: low complexity. Residues 86–251 (ASAPTARCVT…CSLRGEKNVH (166 aa)) form the Helicase ATP-binding domain. 99 to 106 (APMGSGKT) is a binding site for ATP.

The protein belongs to the herpesviridae OriBP family. Homodimer. Interacts with the major DNA-binding protein ICP8. Interacts with the helicase/primase component UL8 and the polymerase accessory protein UL42.

It localises to the host nucleus. Functionally, functions as a docking protein to recruit essential components of the viral replication machinery to viral DNA origins. In the presence of the major DNA-binding protein, opens dsDNA leading to a conformational change in the origin that facilitates DNA unwinding and subsequent replication. This chain is Replication origin-binding protein, found in Human herpesvirus 2 (strain HG52) (HHV-2).